The primary structure comprises 316 residues: HPr kinase/phosphorylase (316 aa).

Active-site residues include His146 and Lys167. Position 161-168 (161-168 (GESGLGKS)) interacts with ATP. Ser168 is a binding site for Mg(2+). The active-site Proton acceptor; for phosphorylation activity. Proton donor; for dephosphorylation activity is the Asp185. Positions 209–218 (LEVRGIGLLD) are important for the catalytic mechanism of both phosphorylation and dephosphorylation. Glu210 is a Mg(2+) binding site. The active site involves Arg252. The important for the catalytic mechanism of dephosphorylation stretch occupies residues 273-278 (QVEAGR).

Belongs to the HPrK/P family. Homohexamer. The cofactor is Mg(2+).

It catalyses the reaction [HPr protein]-L-serine + ATP = [HPr protein]-O-phospho-L-serine + ADP + H(+). The enzyme catalyses [HPr protein]-O-phospho-L-serine + phosphate + H(+) = [HPr protein]-L-serine + diphosphate. Functionally, catalyzes the ATP- as well as the pyrophosphate-dependent phosphorylation of a specific serine residue in HPr, a phosphocarrier protein of the phosphoenolpyruvate-dependent sugar phosphotransferase system (PTS). HprK/P also catalyzes the pyrophosphate-producing, inorganic phosphate-dependent dephosphorylation (phosphorolysis) of seryl-phosphorylated HPr (P-Ser-HPr). The protein is HPr kinase/phosphorylase of Polaromonas naphthalenivorans (strain CJ2).